A 72-amino-acid polypeptide reads, in one-letter code: Conotoxin VnMKLT2-011 (72 aa).

The N-terminal stretch at 1-23 (MMKLTCVLIIAVLFLTACQLTTA) is a signal peptide. Positions 24 to 42 (ETRDEYRAVRSSDEVRNSR) are excised as a propeptide. Intrachain disulfides connect cysteine 44–cysteine 57, cysteine 51–cysteine 62, and cysteine 56–cysteine 71.

Belongs to the conotoxin O1 superfamily. In terms of tissue distribution, expressed by the venom duct.

It localises to the secreted. The chain is Conotoxin VnMKLT2-011 from Conus ventricosus (Mediterranean cone).